Reading from the N-terminus, the 778-residue chain is uncharacterized protein (778 aa).

The PE domain maps to 1 to 92 (MSFVIAVPEA…GARSYVVAEA (92 aa)). Disordered stretches follow at residues 125 to 163 (ADGT…AGLI), 372 to 510 (TGLA…GDAF), and 718 to 778 (QGGL…GADG). 3 stretches are compositionally biased toward gly residues: residues 402 to 429 (NQTG…GGLG), 436 to 510 (DGTG…GDAF), and 718 to 763 (QGGL…GSSG).

The protein belongs to the mycobacterial PE family. PGRS subfamily.

This is an uncharacterized protein from Mycobacterium bovis (strain ATCC BAA-935 / AF2122/97).